Reading from the N-terminus, the 321-residue chain is Putative membrane-bound redox modulator Alx (321 aa).

At 1–6 the chain is on the periplasmic side; sequence MNTVGT. Residues 7–27 traverse the membrane as a helical segment; sequence PLLWGGFAVVVAIMLAIDLLL. The Cytoplasmic portion of the chain corresponds to 28–43; sequence QGRRGAHAMTMKQAAA. The chain crosses the membrane as a helical span at residues 44 to 64; the sequence is WSLVWVTLSLLFNAAFWWYLV. At 65–89 the chain is on the periplasmic side; sequence QTEGRAVADPQALAFLTGYLIEKSL. Residues 90–110 traverse the membrane as a helical segment; it reads AVDNVFVWLMLFSYFSVPAAL. Topologically, residues 111–113 are cytoplasmic; it reads QRR. A helical membrane pass occupies residues 114–134; sequence VLVYGVLGAIVLRTIMIFTGS. Residue Trp135 is a topological domain, periplasmic. Residues 136-156 form a helical membrane-spanning segment; that stretch reads LISQFDWILYIFGAFLLFTGV. At 157-198 the chain is on the cytoplasmic side; it reads KMALAHEDESGIGDKPLVRWLRGHLRMTDTIDNEHFFVRKNG. The chain crosses the membrane as a helical span at residues 199–219; the sequence is LLYATPLMLVLILVELSDVIF. Residues 220–225 lie on the Periplasmic side of the membrane; that stretch reads AVDSIP. Residues 226–246 form a helical membrane-spanning segment; sequence AIFAVTTDPFIVLTSNLFAIL. Residues 247-261 lie on the Cytoplasmic side of the membrane; the sequence is GLRAMYFLLAGVAER. Residues 262 to 282 form a helical membrane-spanning segment; the sequence is FSMLKYGLAVILVFIGIKMLI. Over 283–286 the chain is Periplasmic; it reads VDFY. A helical transmembrane segment spans residues 287-307; the sequence is HIPIAVSLGVVFGILVMTFII. The Cytoplasmic portion of the chain corresponds to 308 to 321; that stretch reads NAWVNYRHDKQRGG.

Belongs to the TerC family.

The protein localises to the cell inner membrane. Has been proposed to be a redox modulator. The chain is Putative membrane-bound redox modulator Alx from Escherichia coli (strain K12).